Here is a 277-residue protein sequence, read N- to C-terminus: Hydroxyethylthiazole kinase (277 aa).

Met55 is a binding site for substrate. ATP is bound by residues Arg130 and Ser176. Gly203 is a binding site for substrate.

This sequence belongs to the Thz kinase family. The cofactor is Mg(2+).

The catalysed reaction is 5-(2-hydroxyethyl)-4-methylthiazole + ATP = 4-methyl-5-(2-phosphooxyethyl)-thiazole + ADP + H(+). The protein operates within cofactor biosynthesis; thiamine diphosphate biosynthesis; 4-methyl-5-(2-phosphoethyl)-thiazole from 5-(2-hydroxyethyl)-4-methylthiazole: step 1/1. In terms of biological role, catalyzes the phosphorylation of the hydroxyl group of 4-methyl-5-beta-hydroxyethylthiazole (THZ). The sequence is that of Hydroxyethylthiazole kinase from Cutibacterium acnes (strain DSM 16379 / KPA171202) (Propionibacterium acnes).